Consider the following 421-residue polypeptide: Hemagglutinin-esterase (421 aa).

An N-terminal signal peptide occupies residues 1–16 (MFLLPRFILVSCIIGS). The segment at 7–127 (FILVSCIIGS…SNDIWMQNKG (121 aa)) is esterase domain 1. Topologically, residues 17–392 (LGFDNPPTNV…PICVYDPLPL (376 aa)) are virion surface. The Nucleophile role is filled by S40. The cysteines at positions 44 and 65 are disulfide-linked. Residues N54, N89, N153, N236, and N301 are each glycosylated (N-linked (GlcNAc...) asparagine; by host). Intrachain disulfides connect C113–C162, C197–C276, and C205–C249. The interval 128 to 266 (LFYTQVYKNM…GNYLAISNEL (139 aa)) is receptor binding. An esterase domain 2 region spans residues 267–379 (LLTVPTKAIC…RCPTAADINT (113 aa)). A disulfide bridge connects residues C307 and C312. N-linked (GlcNAc...) asparagine; by host glycosylation is present at N316. Residues D326 and H329 each act as charge relay system in the active site. Residues C347 and C371 are joined by a disulfide bond. N358 is a glycosylation site (N-linked (GlcNAc...) asparagine; by host). A helical transmembrane segment spans residues 393–413 (ILLGILLGVAVIIIVVLLLYF). The Intravirion segment spans residues 414 to 421 (MVENGTRL). N417 carries N-linked (GlcNAc...) asparagine; by host glycosylation.

It belongs to the influenza type C/coronaviruses hemagglutinin-esterase family. In terms of assembly, homodimer; disulfide-linked. Forms a complex with the M protein in the pre-Golgi. Associates then with S-M complex to form a ternary complex S-M-HE. In terms of processing, N-glycosylated in the host RER.

It is found in the virion membrane. It localises to the host cell membrane. It catalyses the reaction N-acetyl-9-O-acetylneuraminate + H2O = N-acetylneuraminate + acetate + H(+). It carries out the reaction N-acetyl-4-O-acetylneuraminate + H2O = N-acetylneuraminate + acetate + H(+). Its function is as follows. Structural protein that makes short spikes at the surface of the virus. Contains receptor binding and receptor-destroying activities. Mediates de-O-acetylation of N-acetyl-4-O-acetylneuraminic acid, which is probably the receptor determinant recognized by the virus on the surface of erythrocytes and susceptible cells. This receptor-destroying activity is important for virus release as it probably helps preventing self-aggregation and ensures the efficient spread of the progeny virus from cell to cell. May serve as a secondary viral attachment protein for initiating infection, the spike protein being the major one. May become a target for both the humoral and the cellular branches of the immune system. This Bos taurus (Bovine) protein is Hemagglutinin-esterase.